The following is an 89-amino-acid chain: Small ribosomal subunit protein uS15 (89 aa).

It belongs to the universal ribosomal protein uS15 family. As to quaternary structure, part of the 30S ribosomal subunit. Forms a bridge to the 50S subunit in the 70S ribosome, contacting the 23S rRNA.

One of the primary rRNA binding proteins, it binds directly to 16S rRNA where it helps nucleate assembly of the platform of the 30S subunit by binding and bridging several RNA helices of the 16S rRNA. Its function is as follows. Forms an intersubunit bridge (bridge B4) with the 23S rRNA of the 50S subunit in the ribosome. The protein is Small ribosomal subunit protein uS15 of Geobacillus stearothermophilus (Bacillus stearothermophilus).